A 228-amino-acid chain; its full sequence is DNA-binding response regulator MtrA (228 aa).

In terms of domain architecture, Response regulatory spans 7 to 120 (RILVVDDDPS…ELVARVRARL (114 aa)). D56 is modified (4-aspartylphosphate). Positions 128–227 (AEMLSIGDVE…VRGVGYKAGP (100 aa)) form a DNA-binding region, ompR/PhoB-type.

Probably a monomer when inactive, phosphorylation may permit it to oligomerize. The monomeric form does not seem to be phosphorylated. Phosphorylated by MtrB.

The protein localises to the cytoplasm. Member of the two-component regulatory system MtrA/MtrB, responding to environmental signals. Controls expression of a number of genes including dnaA, ripA, fbpB and probably itself. Probably plays a role in cell division. The sequence is that of DNA-binding response regulator MtrA (mtrA) from Mycolicibacterium smegmatis (strain ATCC 700084 / mc(2)155) (Mycobacterium smegmatis).